The following is a 436-amino-acid chain: MSKPLPLVTRQGDRIVIVNGLRTPFAKQATAYHGVPAVDLGKIVVSELLARSGISSELIDQLVFGQVVQMPEAPNIAREIVLGTGMSVHTDAYSVSRACATSFQAVANVAESIIAGSVDIAIAGGADSSSVLPIGVSKALARTLVDANKARSLSQKLKLFSRLRLRDLLPVAPAVAEYSTGLRMGDTAEQMAKTYGISREDQDALALRSHQLAAEAWQQGWLHDEVMTAYIPPYREAIIEDNNIRKDSTLAQYAKLRPAFDRQHGSVTAANSTPLTDGAAAVLMMSESKAKALGLPPLGYLRSFAFSAIDVWQDMLLGPSYATPLALDRAGITLADLTLIDMHEAFAAQTLANLKMFASDTFAREKLGRSQAIGEVDMSKFNVLGGSIAYGHPFAATGARMITQTLNELRRRGGGLGLTTACAAGGLGAAMILEVE.

The active-site Acyl-thioester intermediate is the Cys-99. Residues His-392 and Cys-422 each act as proton acceptor in the active site.

It belongs to the thiolase-like superfamily. Thiolase family. In terms of assembly, heterotetramer of two alpha chains (FadJ) and two beta chains (FadI).

The protein resides in the cytoplasm. It catalyses the reaction an acyl-CoA + acetyl-CoA = a 3-oxoacyl-CoA + CoA. The protein operates within lipid metabolism; fatty acid beta-oxidation. In terms of biological role, catalyzes the final step of fatty acid oxidation in which acetyl-CoA is released and the CoA ester of a fatty acid two carbons shorter is formed. This is 3-ketoacyl-CoA thiolase from Yersinia pseudotuberculosis serotype O:1b (strain IP 31758).